We begin with the raw amino-acid sequence, 309 residues long: Homoserine O-succinyltransferase (309 aa).

The active-site Acyl-thioester intermediate is the C142. Substrate-binding residues include K163 and S192. H235 acts as the Proton acceptor in catalysis. Residue E237 is part of the active site. R249 is a binding site for substrate.

It belongs to the MetA family. In terms of assembly, homodimer.

The protein resides in the cytoplasm. It carries out the reaction L-homoserine + succinyl-CoA = O-succinyl-L-homoserine + CoA. It participates in amino-acid biosynthesis; L-methionine biosynthesis via de novo pathway; O-succinyl-L-homoserine from L-homoserine: step 1/1. In terms of biological role, transfers a succinyl group from succinyl-CoA to L-homoserine, forming succinyl-L-homoserine. In Escherichia coli O127:H6 (strain E2348/69 / EPEC), this protein is Homoserine O-succinyltransferase.